Consider the following 105-residue polypeptide: UPF0145 protein (105 aa).

This sequence belongs to the UPF0145 family.

The protein is UPF0145 protein of Enterococcus faecalis (Streptococcus faecalis).